We begin with the raw amino-acid sequence, 101 residues long: Co-chaperonin GroES 1 (101 aa).

It belongs to the GroES chaperonin family. As to quaternary structure, heptamer of 7 subunits arranged in a ring. Interacts with the chaperonin GroEL.

It is found in the cytoplasm. Its function is as follows. Together with the chaperonin GroEL, plays an essential role in assisting protein folding. The GroEL-GroES system forms a nano-cage that allows encapsulation of the non-native substrate proteins and provides a physical environment optimized to promote and accelerate protein folding. GroES binds to the apical surface of the GroEL ring, thereby capping the opening of the GroEL channel. The chain is Co-chaperonin GroES 1 from Rhodopirellula baltica (strain DSM 10527 / NCIMB 13988 / SH1).